The primary structure comprises 636 residues: Threonine--tRNA ligase (636 aa).

The TGS domain maps to 1 to 63 (MINITTSFPN…SKDGSVDPVT (63 aa)). Positions 244-535 (DHRKIAKDLG…LIEHYAGNIP (292 aa)) are catalytic. Zn(2+) is bound by residues Cys-335, His-386, and His-512.

This sequence belongs to the class-II aminoacyl-tRNA synthetase family. Homodimer. The cofactor is Zn(2+).

The protein resides in the cytoplasm. The enzyme catalyses tRNA(Thr) + L-threonine + ATP = L-threonyl-tRNA(Thr) + AMP + diphosphate + H(+). Functionally, catalyzes the attachment of threonine to tRNA(Thr) in a two-step reaction: L-threonine is first activated by ATP to form Thr-AMP and then transferred to the acceptor end of tRNA(Thr). Also edits incorrectly charged L-seryl-tRNA(Thr). This Anaplasma marginale (strain Florida) protein is Threonine--tRNA ligase.